The primary structure comprises 308 residues: Ribonuclease HIII (308 aa).

An RNase H type-2 domain is found at 93 to 308; that stretch reads MSVLGSDETG…ANTEKARKMI (216 aa). A divalent metal cation-binding residues include aspartate 99, glutamate 100, and aspartate 204.

It belongs to the RNase HII family. RnhC subfamily. It depends on Mn(2+) as a cofactor. Mg(2+) is required as a cofactor.

Its subcellular location is the cytoplasm. It carries out the reaction Endonucleolytic cleavage to 5'-phosphomonoester.. Endonuclease that specifically degrades the RNA of RNA-DNA hybrids. This chain is Ribonuclease HIII, found in Lysinibacillus sphaericus (strain C3-41).